The following is a 365-amino-acid chain: MINLGDKQSTIVVAMSGGVDSSAVAAMLHEQGHNVIGITLQLYDHGMAVGKKNSCCAGQDIYDAKMVANKLGIPHYVLDYESKFKESVIDNFVDSYLQGETPLPCVQCNKSVKFRDLIKTARELGADKLATGHYVRKINGDNGAELHTGLDPAKDQSYFLFMTTKEQLEYLRFPLGGLTKGETRKLASKFGLEVADKPDSQDICFIPDGNYKSVINKIRPNSSESGKIIHVNGFELGEHSGIINYTIGQRRGLGIAYNEPLYVVKIDPKDNIVYVGPESALNVQEFIIRDVNWLADEIKDNEKLEVAVKIRSTRPPRLAEISKLGDDKMKVKFLCEEKAVAPGQACVIYAGERVLGGGWITREIR.

ATP contacts are provided by residues 14-21 and Leu-40; that span reads AMSGGVDS. Catalysis depends on Cys-108, which acts as the Nucleophile. Cys-108 and Cys-204 are joined by a disulfide. Gly-132 contributes to the ATP binding site. Residues 154-156 are interaction with tRNA; the sequence is KDQ. Cys-204 serves as the catalytic Cysteine persulfide intermediate.

Belongs to the MnmA/TRMU family.

Its subcellular location is the cytoplasm. It carries out the reaction S-sulfanyl-L-cysteinyl-[protein] + uridine(34) in tRNA + AH2 + ATP = 2-thiouridine(34) in tRNA + L-cysteinyl-[protein] + A + AMP + diphosphate + H(+). Functionally, catalyzes the 2-thiolation of uridine at the wobble position (U34) of tRNA, leading to the formation of s(2)U34. The sequence is that of tRNA-specific 2-thiouridylase MnmA from Rickettsia peacockii (strain Rustic).